The primary structure comprises 426 residues: MRYQRPKGTADILPGDSEKWQYVEATARAVFKTYQFKEIRTPMFENFEVFSRSAGDTSDIVTKEMYDFHDKGDRHITLRPEGTAGVVRAFVENKLYGPQVLKPYKVYYMGPMFRYERPQSGRLREFHQLGVEAFGSESAALDVEVIAMGYNLLKTFGLTDLKLVINTLGDQQTRDDYRQALIDYLEPHFDELSDDSKERLHKNPLRVLDSKAPEDQQFVADAPSILDYLSPEAQAHFDQTKTYLDALAIPYEIDATMVRGLDYYNHTIFEIMTHSKALGKGYTTICAGGRYNGLVKELGGPEVSGVGFGLGVERLLVLMDAENIAVPTDDQLDVYVVGIGDTASATTLKLVQALRAAGYKAERDYLDRKPKAQFKSADRLNARYTMTVGETELADQVVNLKAMATGEETKVAMADIYQDAHQVLDK.

This sequence belongs to the class-II aminoacyl-tRNA synthetase family. Homodimer.

The protein resides in the cytoplasm. The catalysed reaction is tRNA(His) + L-histidine + ATP = L-histidyl-tRNA(His) + AMP + diphosphate + H(+). This Lactiplantibacillus plantarum (strain ATCC BAA-793 / NCIMB 8826 / WCFS1) (Lactobacillus plantarum) protein is Histidine--tRNA ligase.